The chain runs to 341 residues: Methionine import ATP-binding protein MetN (341 aa).

One can recognise an ABC transporter domain in the interval 9–247 (ISVQKVNKEI…PRSSITEELF (239 aa)). ATP is bound at residue 41–48 (GHSGSGKS).

Belongs to the ABC transporter superfamily. Methionine importer (TC 3.A.1.24) family. As to quaternary structure, the complex is composed of two ATP-binding proteins (MetN), two transmembrane proteins (MetI) and a solute-binding protein (MetQ).

It localises to the cell inner membrane. It catalyses the reaction L-methionine(out) + ATP + H2O = L-methionine(in) + ADP + phosphate + H(+). It carries out the reaction D-methionine(out) + ATP + H2O = D-methionine(in) + ADP + phosphate + H(+). Part of the ABC transporter complex MetNIQ involved in methionine import. Responsible for energy coupling to the transport system. The protein is Methionine import ATP-binding protein MetN of Chlamydia caviae (strain ATCC VR-813 / DSM 19441 / 03DC25 / GPIC) (Chlamydophila caviae).